The chain runs to 431 residues: Enolase (431 aa).

Gln-167 lines the (2R)-2-phosphoglycerate pocket. Glu-209 serves as the catalytic Proton donor. Asp-246, Glu-289, and Asp-316 together coordinate Mg(2+). (2R)-2-phosphoglycerate contacts are provided by Lys-341, Arg-370, Ser-371, and Lys-392. Lys-341 acts as the Proton acceptor in catalysis.

It belongs to the enolase family. As to quaternary structure, component of the RNA degradosome, a multiprotein complex involved in RNA processing and mRNA degradation. It depends on Mg(2+) as a cofactor.

Its subcellular location is the cytoplasm. It is found in the secreted. The protein resides in the cell surface. It catalyses the reaction (2R)-2-phosphoglycerate = phosphoenolpyruvate + H2O. Its pathway is carbohydrate degradation; glycolysis; pyruvate from D-glyceraldehyde 3-phosphate: step 4/5. In terms of biological role, catalyzes the reversible conversion of 2-phosphoglycerate (2-PG) into phosphoenolpyruvate (PEP). It is essential for the degradation of carbohydrates via glycolysis. This Shewanella loihica (strain ATCC BAA-1088 / PV-4) protein is Enolase.